The following is a 293-amino-acid chain: Ethanolamine ammonia-lyase small subunit (293 aa).

Adenosylcob(III)alamin-binding residues include V207 and E228.

This sequence belongs to the EutC family. In terms of assembly, the basic unit is a heterodimer which dimerizes to form tetramers. The heterotetramers trimerize; 6 large subunits form a core ring with 6 small subunits projecting outwards. Requires adenosylcob(III)alamin as cofactor.

It localises to the bacterial microcompartment. The catalysed reaction is ethanolamine = acetaldehyde + NH4(+). Its pathway is amine and polyamine degradation; ethanolamine degradation. In terms of biological role, catalyzes the deamination of various vicinal amino-alcohols to oxo compounds. Allows this organism to utilize ethanolamine as the sole source of nitrogen and carbon in the presence of external vitamin B12. The sequence is that of Ethanolamine ammonia-lyase small subunit from Listeria monocytogenes serotype 4a (strain HCC23).